Consider the following 137-residue polypeptide: Small ribosomal subunit protein eS17 (137 aa).

It belongs to the eukaryotic ribosomal protein eS17 family. Component of the small ribosomal subunit. Mature ribosomes consist of a small (40S) and a large (60S) subunit. The 40S subunit contains about 32 different proteins and 1 molecule of RNA (18S). The 60S subunit contains 45 different proteins and 3 molecules of RNA (25S, 5.8S and 5S).

The protein localises to the cytoplasm. Functionally, component of the ribosome, a large ribonucleoprotein complex responsible for the synthesis of proteins in the cell. The small ribosomal subunit (SSU) binds messenger RNAs (mRNAs) and translates the encoded message by selecting cognate aminoacyl-transfer RNA (tRNA) molecules. The large subunit (LSU) contains the ribosomal catalytic site termed the peptidyl transferase center (PTC), which catalyzes the formation of peptide bonds, thereby polymerizing the amino acids delivered by tRNAs into a polypeptide chain. The nascent polypeptides leave the ribosome through a tunnel in the LSU and interact with protein factors that function in enzymatic processing, targeting, and the membrane insertion of nascent chains at the exit of the ribosomal tunnel. The protein is Small ribosomal subunit protein eS17 (RPS17B) of Candida albicans (strain SC5314 / ATCC MYA-2876) (Yeast).